Reading from the N-terminus, the 344-residue chain is Holliday junction branch migration complex subunit RuvB (344 aa).

Residues 1–182 (MRIELLNTPV…FGISNRFDYY (182 aa)) are large ATPase domain (RuvB-L). Residues I21, R22, G63, K66, T67, T68, 129–131 (EDF), R172, Y182, and R219 each bind ATP. T67 provides a ligand contact to Mg(2+). The interval 183–253 (PPELLETILM…TAMKTLDSLE (71 aa)) is small ATPAse domain (RuvB-S). Residues 256-344 (EEGLDEMDKK…GTLFDGQEHV (89 aa)) are head domain (RuvB-H). DNA is bound by residues R311 and R316.

This sequence belongs to the RuvB family. As to quaternary structure, homohexamer. Forms an RuvA(8)-RuvB(12)-Holliday junction (HJ) complex. HJ DNA is sandwiched between 2 RuvA tetramers; dsDNA enters through RuvA and exits via RuvB. An RuvB hexamer assembles on each DNA strand where it exits the tetramer. Each RuvB hexamer is contacted by two RuvA subunits (via domain III) on 2 adjacent RuvB subunits; this complex drives branch migration. In the full resolvosome a probable DNA-RuvA(4)-RuvB(12)-RuvC(2) complex forms which resolves the HJ.

It localises to the cytoplasm. The enzyme catalyses ATP + H2O = ADP + phosphate + H(+). The RuvA-RuvB-RuvC complex processes Holliday junction (HJ) DNA during genetic recombination and DNA repair, while the RuvA-RuvB complex plays an important role in the rescue of blocked DNA replication forks via replication fork reversal (RFR). RuvA specifically binds to HJ cruciform DNA, conferring on it an open structure. The RuvB hexamer acts as an ATP-dependent pump, pulling dsDNA into and through the RuvAB complex. RuvB forms 2 homohexamers on either side of HJ DNA bound by 1 or 2 RuvA tetramers; 4 subunits per hexamer contact DNA at a time. Coordinated motions by a converter formed by DNA-disengaged RuvB subunits stimulates ATP hydrolysis and nucleotide exchange. Immobilization of the converter enables RuvB to convert the ATP-contained energy into a lever motion, pulling 2 nucleotides of DNA out of the RuvA tetramer per ATP hydrolyzed, thus driving DNA branch migration. The RuvB motors rotate together with the DNA substrate, which together with the progressing nucleotide cycle form the mechanistic basis for DNA recombination by continuous HJ branch migration. Branch migration allows RuvC to scan DNA until it finds its consensus sequence, where it cleaves and resolves cruciform DNA. In Chlorobium luteolum (strain DSM 273 / BCRC 81028 / 2530) (Pelodictyon luteolum), this protein is Holliday junction branch migration complex subunit RuvB.